The chain runs to 55 residues: Cortexin domain containing 2 (55 aa).

Residues 16–36 form a helical membrane-spanning segment; it reads FAIAFVVLLFLFLIVMIFRCA.

The protein localises to the membrane. In Homo sapiens (Human), this protein is Cortexin domain containing 2.